Reading from the N-terminus, the 394-residue chain is NAD(P)H-quinone oxidoreductase subunit H (394 aa).

This sequence belongs to the complex I 49 kDa subunit family. NDH-1 can be composed of about 15 different subunits; different subcomplexes with different compositions have been identified which probably have different functions.

The protein localises to the cellular thylakoid membrane. The enzyme catalyses a plastoquinone + NADH + (n+1) H(+)(in) = a plastoquinol + NAD(+) + n H(+)(out). It catalyses the reaction a plastoquinone + NADPH + (n+1) H(+)(in) = a plastoquinol + NADP(+) + n H(+)(out). NDH-1 shuttles electrons from an unknown electron donor, via FMN and iron-sulfur (Fe-S) centers, to quinones in the respiratory and/or the photosynthetic chain. The immediate electron acceptor for the enzyme in this species is believed to be plastoquinone. Couples the redox reaction to proton translocation, and thus conserves the redox energy in a proton gradient. Cyanobacterial NDH-1 also plays a role in inorganic carbon-concentration. The protein is NAD(P)H-quinone oxidoreductase subunit H of Prochlorococcus marinus (strain MIT 9303).